The chain runs to 236 residues: Small ribosomal subunit protein uS3 (236 aa).

The KH type-2 domain occupies Val39–Lys107.

It belongs to the universal ribosomal protein uS3 family. As to quaternary structure, part of the 30S ribosomal subunit. Forms a tight complex with proteins S10 and S14.

In terms of biological role, binds the lower part of the 30S subunit head. Binds mRNA in the 70S ribosome, positioning it for translation. The protein is Small ribosomal subunit protein uS3 of Wigglesworthia glossinidia brevipalpis.